The following is a 54-amino-acid chain: Small ribosomal subunit protein uS14 (54 aa).

4 residues coordinate Zn(2+): C19, C22, C37, and C40.

Belongs to the universal ribosomal protein uS14 family. Zinc-binding uS14 subfamily. Part of the 30S ribosomal subunit. Zn(2+) is required as a cofactor.

Its function is as follows. Binds 16S rRNA, required for the assembly of 30S particles. This is Small ribosomal subunit protein uS14 from Saccharolobus solfataricus (strain ATCC 35092 / DSM 1617 / JCM 11322 / P2) (Sulfolobus solfataricus).